Reading from the N-terminus, the 493-residue chain is Fizzy-related protein homolog (493 aa).

3 disordered regions span residues 31-51 (LTPANSPVSSPSKHGDRFIPS), 64-88 (INENEKSPSQNRKAKDATSDNGKDG), and 105-166 (EKVQ…SPRK). Thr32 carries the post-translational modification Phosphothreonine. Residues 32–42 (TPANSPVSSPS) show a composition bias toward polar residues. Ser36 bears the Phosphoserine mark. Lys69 is modified (N6-acetyllysine). Composition is skewed to basic and acidic residues over residues 76–86 (KAKDATSDNGK) and 106–126 (KVQDPQTEDRRLQPSTPEHKG). Residues Ser133, Ser138, Ser146, and Ser151 each carry the phosphoserine modification. Positions 146-160 (SPYSLSPVSNKSQKL) are enriched in polar residues. Lys159 is subject to N6-acetyllysine. 7 WD repeats span residues 182–222 (PELQ…VTRL), 227–266 (VEGDSVTSVGWSERGNLVAVGTHKGFVQIWDAAAGKKLSM), 269–306 (GHTARVGALAWNADQLSSGSRDRMILQRDIRTPPLQSE), 311–350 (GHRQEVCGLKWSTDHQLLASGGNDNKLLVWNHSSLSPVQQ), 353–395 (EHLA…PLQC), 397–438 (DTGS…QVAK), and 441–480 (GHSYRVLYLAMSPDGEAIVTGAGDETLRFWNVFSKTRSTK).

The protein belongs to the WD repeat CDC20/Fizzy family. The unphosphorylated form interacts with APC/C during mitosis. Interacts with NINL. Interacts (in complex with the anaphase promoting complex APC) with MAD2L2; inhibits FZR1-mediated APC/C activation. Interacts with SIRT2. Interacts with USP37. Interacts (via WD repeats) with MAK. Interacts with RBBP8/CtIP; this interaction leads to RBBP8 proteasomal degradation. Interacts with HECW2. Interacts with SASS6; the interaction is regulated by CENATAC and leads to SASS6 proteasomal degradation. Interacts (via N-terminus) with CCNF. Interacts with CDC6. Interacts with TK1 (via the KEN box). Acetylated. Deacetylated by SIRT2 at Lys-69 and Lys-159; deacetylation enhances the interaction of FZR1 with CDC27, leading to activation of anaphase promoting complex/cyclosome (APC/C). In terms of processing, following DNA damage, it is dephosphorylated by CDC14B in G2 phase, leading to its reassociation with the APC/C, and allowing an efficient G2 DNA damage checkpoint. Phosphorylated by MAK.

The protein operates within protein modification; protein ubiquitination. Its function is as follows. Substrate-specific adapter for the anaphase promoting complex/cyclosome (APC/C) E3 ubiquitin-protein ligase complex. Associates with the APC/C in late mitosis, in replacement of CDC20, and activates the APC/C during anaphase and telophase. The APC/C remains active in degrading substrates to ensure that positive regulators of the cell cycle do not accumulate prematurely. At the G1/S transition FZR1 is phosphorylated, leading to its dissociation from the APC/C. Following DNA damage, it is required for the G2 DNA damage checkpoint: its dephosphorylation and reassociation with the APC/C leads to the ubiquitination of PLK1, preventing entry into mitosis. Acts as an adapter for APC/C to target the DNA-end resection factor RBBP8/CtIP for ubiquitination and subsequent proteasomal degradation. Through the regulation of RBBP8/CtIP protein turnover, may play a role in DNA damage response, favoring DNA double-strand repair through error-prone non-homologous end joining (NHEJ) over error-free, RBBP8-mediated homologous recombination (HR). This is Fizzy-related protein homolog (Fzr1) from Mus musculus (Mouse).